We begin with the raw amino-acid sequence, 320 residues long: o-succinylbenzoate synthase (320 aa).

Lys133 (proton donor) is an active-site residue. Mg(2+) is bound by residues Asp161, Glu190, and Asp213. Lys235 serves as the catalytic Proton acceptor.

The protein belongs to the mandelate racemase/muconate lactonizing enzyme family. MenC type 1 subfamily. A divalent metal cation serves as cofactor.

The enzyme catalyses (1R,6R)-6-hydroxy-2-succinyl-cyclohexa-2,4-diene-1-carboxylate = 2-succinylbenzoate + H2O. It participates in quinol/quinone metabolism; 1,4-dihydroxy-2-naphthoate biosynthesis; 1,4-dihydroxy-2-naphthoate from chorismate: step 4/7. Its pathway is quinol/quinone metabolism; menaquinone biosynthesis. Functionally, converts 2-succinyl-6-hydroxy-2,4-cyclohexadiene-1-carboxylate (SHCHC) to 2-succinylbenzoate (OSB). The sequence is that of o-succinylbenzoate synthase from Salmonella typhi.